Here is a 242-residue protein sequence, read N- to C-terminus: MKPSDGLEALQNLLGYRFGDEGLLHRALVHRSYLHENPHLDEKDNETLEFLGDAVLGLAISHFLLEQFPDYNEGELSRLRSAIVNERELTRIAVELNLGEYLLLGKGEEMTGGRRKASLLADSLEALLASIYLDGGLDAVLGVIKKLFDVYLRFEKREHVLKALDKDYKTQLQELTQARYKLTPVYVLDREEGPDHDKTFHMNVVLEGQVLAGGSGKSKKDAQQAAAEKALQIIAADSWSLD.

The RNase III domain maps to 7 to 136; the sequence is LEALQNLLGY…LLASIYLDGG (130 aa). Glu49 is a binding site for Mg(2+). Residue Asp53 is part of the active site. Mg(2+)-binding residues include Asp122 and Glu125. Residue Glu125 is part of the active site. In terms of domain architecture, DRBM spans 167–236; that stretch reads DYKTQLQELT…AEKALQIIAA (70 aa).

This sequence belongs to the ribonuclease III family. Homodimer. Mg(2+) is required as a cofactor.

It is found in the cytoplasm. It catalyses the reaction Endonucleolytic cleavage to 5'-phosphomonoester.. Its function is as follows. Digests double-stranded RNA. Involved in the processing of primary rRNA transcript to yield the immediate precursors to the large and small rRNAs (23S and 16S). Processes some mRNAs, and tRNAs when they are encoded in the rRNA operon. Processes pre-crRNA and tracrRNA of type II CRISPR loci if present in the organism. The sequence is that of Ribonuclease 3 from Syntrophobacter fumaroxidans (strain DSM 10017 / MPOB).